The primary structure comprises 200 residues: ATP-dependent Clp protease proteolytic subunit (200 aa).

The active-site Nucleophile is Ser96. Residue His121 is part of the active site.

The protein belongs to the peptidase S14 family. As to quaternary structure, fourteen ClpP subunits assemble into 2 heptameric rings which stack back to back to give a disk-like structure with a central cavity, resembling the structure of eukaryotic proteasomes.

It is found in the cytoplasm. It catalyses the reaction Hydrolysis of proteins to small peptides in the presence of ATP and magnesium. alpha-casein is the usual test substrate. In the absence of ATP, only oligopeptides shorter than five residues are hydrolyzed (such as succinyl-Leu-Tyr-|-NHMec, and Leu-Tyr-Leu-|-Tyr-Trp, in which cleavage of the -Tyr-|-Leu- and -Tyr-|-Trp bonds also occurs).. Cleaves peptides in various proteins in a process that requires ATP hydrolysis. Has a chymotrypsin-like activity. Plays a major role in the degradation of misfolded proteins. The protein is ATP-dependent Clp protease proteolytic subunit of Leuconostoc citreum (strain KM20).